The chain runs to 1062 residues: Carbamoyl phosphate synthase large chain (1062 aa).

Residues 1-401 (MPKRTDIHKI…AMQKAVQSLE (401 aa)) are carboxyphosphate synthetic domain. Residues R129, R169, G175, G176, K208, I210, E215, G241, I242, H243, Q284, and E298 each coordinate ATP. The region spanning 133 to 327 (KELCQKLGEP…IAKMAAKIAI (195 aa)) is the ATP-grasp 1 domain. Positions 284, 298, and 300 each coordinate Mg(2+). Residues Q284, E298, and N300 each coordinate Mn(2+). The interval 402–546 (IDEKDLYSAK…YSTYDGENES (145 aa)) is oligomerization domain. The interval 547–929 (RKSGKKSVIV…ALYKAFAGAK (383 aa)) is carbamoyl phosphate synthetic domain. The ATP-grasp 2 domain occupies 671-861 (DQIIKSLHLH…MAQVATRVIM (191 aa)). ATP-binding residues include R707, D746, L748, E752, G777, V778, H779, S780, Q820, and E832. The Mg(2+) site is built by Q820, E832, and N834. Positions 820, 832, and 834 each coordinate Mn(2+). The MGS-like domain occupies 930 to 1062 (MQLPENGNVL…NRSFATDALK (133 aa)). The tract at residues 930–1062 (MQLPENGNVL…NRSFATDALK (133 aa)) is allosteric domain.

It belongs to the CarB family. In terms of assembly, composed of two chains; the small (or glutamine) chain promotes the hydrolysis of glutamine to ammonia, which is used by the large (or ammonia) chain to synthesize carbamoyl phosphate. Tetramer of heterodimers (alpha,beta)4. Requires Mg(2+) as cofactor. Mn(2+) serves as cofactor.

The enzyme catalyses hydrogencarbonate + L-glutamine + 2 ATP + H2O = carbamoyl phosphate + L-glutamate + 2 ADP + phosphate + 2 H(+). The catalysed reaction is hydrogencarbonate + NH4(+) + 2 ATP = carbamoyl phosphate + 2 ADP + phosphate + 2 H(+). The protein operates within amino-acid biosynthesis; L-arginine biosynthesis; carbamoyl phosphate from bicarbonate: step 1/1. Its pathway is pyrimidine metabolism; UMP biosynthesis via de novo pathway; (S)-dihydroorotate from bicarbonate: step 1/3. Large subunit of the glutamine-dependent carbamoyl phosphate synthetase (CPSase). CPSase catalyzes the formation of carbamoyl phosphate from the ammonia moiety of glutamine, carbonate, and phosphate donated by ATP, constituting the first step of 2 biosynthetic pathways, one leading to arginine and/or urea and the other to pyrimidine nucleotides. The large subunit (synthetase) binds the substrates ammonia (free or transferred from glutamine from the small subunit), hydrogencarbonate and ATP and carries out an ATP-coupled ligase reaction, activating hydrogencarbonate by forming carboxy phosphate which reacts with ammonia to form carbamoyl phosphate. In Lactobacillus helveticus (strain DPC 4571), this protein is Carbamoyl phosphate synthase large chain.